Reading from the N-terminus, the 293-residue chain is tRNA pseudouridine synthase B (293 aa).

Asp38 serves as the catalytic Nucleophile.

The protein belongs to the pseudouridine synthase TruB family. Type 1 subfamily.

The enzyme catalyses uridine(55) in tRNA = pseudouridine(55) in tRNA. Functionally, responsible for synthesis of pseudouridine from uracil-55 in the psi GC loop of transfer RNAs. This chain is tRNA pseudouridine synthase B, found in Trichormus variabilis (strain ATCC 29413 / PCC 7937) (Anabaena variabilis).